We begin with the raw amino-acid sequence, 156 residues long: ATP synthase subunit b (156 aa).

A helical transmembrane segment spans residues 12 to 32 (VAFLIFVLFCMKYVWPPVITA).

It belongs to the ATPase B chain family. In terms of assembly, F-type ATPases have 2 components, F(1) - the catalytic core - and F(0) - the membrane proton channel. F(1) has five subunits: alpha(3), beta(3), gamma(1), delta(1), epsilon(1). F(0) has three main subunits: a(1), b(2) and c(10-14). The alpha and beta chains form an alternating ring which encloses part of the gamma chain. F(1) is attached to F(0) by a central stalk formed by the gamma and epsilon chains, while a peripheral stalk is formed by the delta and b chains.

The protein localises to the cell inner membrane. F(1)F(0) ATP synthase produces ATP from ADP in the presence of a proton or sodium gradient. F-type ATPases consist of two structural domains, F(1) containing the extramembraneous catalytic core and F(0) containing the membrane proton channel, linked together by a central stalk and a peripheral stalk. During catalysis, ATP synthesis in the catalytic domain of F(1) is coupled via a rotary mechanism of the central stalk subunits to proton translocation. Functionally, component of the F(0) channel, it forms part of the peripheral stalk, linking F(1) to F(0). In Pseudomonas putida (strain ATCC 700007 / DSM 6899 / JCM 31910 / BCRC 17059 / LMG 24140 / F1), this protein is ATP synthase subunit b.